The following is a 222-amino-acid chain: Ras-related protein Rab-21 (222 aa).

A2 is subject to N-acetylalanine. Residues G25, G28, K29, T30, S31, N42, D43, H45, T47, and T48 each coordinate GTP. T30 is a binding site for Mg(2+). The Switch 1 motif lies at 40-53 (KFNDKHITTLQASF). Residues T48 and D71 each contribute to the Mg(2+) site. The short motif at 73 to 91 (AGQERFHALGPIYYRDSNG) is the Switch 2 element. Residues G74, N129, K130, D132, A160, and K161 each contribute to the GTP site. Residues C218 and C219 are each lipidated (S-geranylgeranyl cysteine). C219 carries the cysteine methyl ester modification. Positions 220–222 (SSG) are cleaved as a propeptide — removed in mature form.

It belongs to the small GTPase superfamily. Rab family. In terms of assembly, interacts with the cytoplasmic tail of integrins ITGA1, ITGA2, ITGA5, ITGA6, ITGA11 and ITGB1; this interaction is dependent upon its GDP/GTP cycle. Interacts with RABGEF1 (via VPS9 domain). Interacts with ANKRD27. Interacts (in GTP-bound form) with VAMP8 in response to starvation; the interaction probably regulates VAMP8 endolysosomal trafficking. Interacts (active GTP-bound form) with TMED10; the interaction is indirect and regulates TMED10 abundance and localization at the Golgi. Requires Mg(2+) as cofactor.

The protein resides in the endoplasmic reticulum membrane. It is found in the golgi apparatus. Its subcellular location is the trans-Golgi network. The protein localises to the golgi apparatus membrane. It localises to the early endosome membrane. The protein resides in the cytoplasmic vesicle membrane. It is found in the cleavage furrow. Its subcellular location is the cell projection. The protein localises to the neuron projection. It catalyses the reaction GTP + H2O = GDP + phosphate + H(+). Regulated by guanine nucleotide exchange factors (GEFs) including ANKRD27 and RABGEF1, which promote the exchange of bound GDP for free GTP. Regulated by GTPase activating proteins (GAPs) which increase the GTP hydrolysis activity. Inhibited by GDP dissociation inhibitors (GDIs). Functionally, the small GTPases Rab are key regulators of intracellular membrane trafficking, from the formation of transport vesicles to their fusion with membranes. Rabs cycle between an inactive GDP-bound form and an active GTP-bound form that is able to recruit to membranes different sets of downstream effectors directly responsible for vesicle formation, movement, tethering and fusion. RAB21 is involved in membrane trafficking control. Regulates integrin internalization and recycling, but does not influence the traffic of endosomally translocated receptors in general. As a result, may regulate cell adhesion and migration. During the mitosis of adherent cells, controls the endosomal trafficking of integrins which is required for the successful completion of cytokinesis. Involved in neurite growth. Following SBF2/MTMT13-mediated activation in response to starvation-induced autophagy, binds to and regulates SNARE protein VAMP8 endolysosomal transport required for SNARE-mediated autophagosome-lysosome fusion. Modulates protein levels of the cargo receptors TMED2 and TMED10, and required for appropriate Golgi localization of TMED10. The sequence is that of Ras-related protein Rab-21 (RAB21) from Bos taurus (Bovine).